The sequence spans 265 residues: Formyltransferase/hydrolase complex Fhc subunit C (265 aa).

It belongs to the FwdC/FmdC family. In terms of assembly, octaheteromer. Part of the formyltransferase/hydrolase complex fhc; composed of FhcA, FhcB, FhcC and FhcD.

It localises to the cytoplasm. Its pathway is one-carbon metabolism; formaldehyde degradation; formate from formaldehyde (H(4)MPT route): step 4/5. Its function is as follows. Involved in the transformation of 5-formyl tetrahydromethanopterin (5-formyl-H(4)MPT) to methanofuran (MFR) and formate via the formylmethanofuran (formyl-MFR). The polypeptide is Formyltransferase/hydrolase complex Fhc subunit C (fhcC) (Methylorubrum extorquens (strain ATCC 14718 / DSM 1338 / JCM 2805 / NCIMB 9133 / AM1) (Methylobacterium extorquens)).